The following is a 299-amino-acid chain: Light-independent protochlorophyllide reductase iron-sulfur ATP-binding protein (299 aa).

Residues 1 to 23 form a disordered region; that stretch reads MSPLDRTPPSLRGQDGEGSVQVH. Residues 43 to 48 and lysine 72 contribute to the ATP site; that span reads GIGKST. Serine 47 is a Mg(2+) binding site. The [4Fe-4S] cluster site is built by cysteine 128 and cysteine 162. ATP-binding positions include 213–214 and 237–239; these read NR and PDL.

Belongs to the NifH/BchL/ChlL family. In terms of assembly, homodimer. Protochlorophyllide reductase is composed of three subunits; BchL, BchN and BchB. The cofactor is [4Fe-4S] cluster.

It catalyses the reaction chlorophyllide a + oxidized 2[4Fe-4S]-[ferredoxin] + 2 ADP + 2 phosphate = protochlorophyllide a + reduced 2[4Fe-4S]-[ferredoxin] + 2 ATP + 2 H2O. The protein operates within porphyrin-containing compound metabolism; bacteriochlorophyll biosynthesis (light-independent). Its function is as follows. Component of the dark-operative protochlorophyllide reductase (DPOR) that uses Mg-ATP and reduced ferredoxin to reduce ring D of protochlorophyllide (Pchlide) to form chlorophyllide a (Chlide). This reaction is light-independent. The L component serves as a unique electron donor to the NB-component of the complex, and binds Mg-ATP. This chain is Light-independent protochlorophyllide reductase iron-sulfur ATP-binding protein, found in Roseobacter denitrificans (strain ATCC 33942 / OCh 114) (Erythrobacter sp. (strain OCh 114)).